A 414-amino-acid polypeptide reads, in one-letter code: MNKNQKPVLTGQRFKTRKRDEKEKFEPTVFRDTIVQGLNEAGSDLEAIAKFLDSAGSRLDYRRYADTLFDILVAGSMLAPGGTRIDDNDKTKMTRHCVFFAEEDHDAIRNYAQVFNKLIRRYKYLEKAFEDEIKKLLLFLKAFSETEQTKLAMLSGILLANGTLPATILTSLFTDNIVKEGIAASFAVKLFKAWMAEKDANSVTSALRKANLDKRLLELFPANRQNVDHFAKYFTEAGLKELSDFLRVQQSLGTRKELQKELQERLSQECPIKEMVLYVKEEMKRNELPEPAVIGLLWTCVMNAVEWNKKEELVAEQALKHLKQYAPLLAVFSTQGQSELILLQKVQEYCYDNIHFMKAFQKIVVLFYKADVLSEEAILKWYKEAHVAKGKSVFLDQMKKFVEWLQNAEEEFRI.

The disordered stretch occupies residues 1-22 (MNKNQKPVLTGQRFKTRKRDEK). One can recognise a W2 domain in the interval 248 to 414 (VQQSLGTRKE…LQNAEEEFRI (167 aa)).

It belongs to the BZW family.

The protein localises to the cytoplasm. Functionally, translation initiation regulator which may repress non-AUG initiated translation and repeat-associated non-AUG (RAN) initiated translation by acting as a competitive inhibitor of eukaryotic translation initiation factor 5 (EIF5) function. The sequence is that of eIF5-mimic protein 1 (BZW2) from Gallus gallus (Chicken).